The following is a 607-amino-acid chain: MSWRNQGITGSNNIPLGSRRRFAGDGEEEDGARSVTPSAPSSVTNGDRDRDRDGPVYSNDRDVKRGRSPERSEDGPKRRKKRNRWGEATENKAAGLMGLPTAIVANMTSEQLEAYTLHLRIEEITQKLKIDDVVPADGDRSPSPAPQYDNHGRRVNTREYRYRKKLEDERHKLIEKAMKTIPNYHPPSDYRRPTKTQEKVYVPVNDYPEINFIGLLIGPRGNTLKKMETESGAKIAIRGKGSVKEGKGRSDAAHSSNQEEDLHCLIMADTEEKVNKAKKLIHNIIETAASIPEGQNELKRNQLRELAALNGTLRDDENQACQNCGQIGHRKYDCPEKQNYTANIICRVCGNAGHMARDCPDRQRGASWRNDGPGAGRTAGRIGSSGGGDAVDREYEQLMQELGGTGAAPARIEAGPGSFSNGPSGGNGDAKPWQRGPTGGPAPWRTRNMDRDHEGGPGGPPSGPSGGPAPWARDRNERRHDDRDRGDSYYGGDRRHDDYGRGSSGGGGPAPWHQPPPGAPSAPAIPTAPAYPGAYGGYPGYGAPPGMGAAPPPGLPPPPPGAPPGLSGPLNALIQQYANAAPPPPPPAAEAPPPPPMDLPPPPPPGA.

2 stretches are compositionally biased toward polar residues: residues Met-1–Pro-15 and Val-35–Asn-45. Disordered stretches follow at residues Met-1–Lys-92 and Val-134–Val-155. Residues Gly-46–Pro-76 show a composition bias toward basic and acidic residues. The 81-residue stretch at Tyr-201–Ile-281 folds into the KH domain. 2 consecutive CCHC-type zinc fingers follow at residues Gln-319 to Glu-336 and Ile-344 to Asp-361. Disordered stretches follow at residues Gln-363–Ala-390 and Ala-407–Ala-607. A compositionally biased stretch (gly residues) spans Pro-373–Asp-389. The span at Ala-472–Gly-500 shows a compositional bias: basic and acidic residues. The span at Ser-521–Gly-533 shows a compositional bias: low complexity. Residues Ala-534–Pro-545 show a composition bias toward gly residues. 2 stretches are compositionally biased toward pro residues: residues Ala-550–Pro-563 and Ala-581–Ala-607.

The protein belongs to the BBP/SF1 family.

Its subcellular location is the nucleus. Necessary for the splicing of pre-mRNA. Has a role in the recognition of the branch site (5'-UACUAAC-3'), the pyrimidine tract and the 3'-splice site at the 3'-end of introns. The protein is Branchpoint-bridging protein (bbp-1) of Neurospora crassa (strain ATCC 24698 / 74-OR23-1A / CBS 708.71 / DSM 1257 / FGSC 987).